The chain runs to 822 residues: General transcription factor 3C polypeptide 4 (822 aa).

Met1 bears the N-acetylmethionine mark. Residues 1 to 41 (MNTADQARVGPADDGPAPSGEEEGEGGGEAGGKEPAADAAP) are disordered. Ser19 carries the post-translational modification Phosphoserine. Lys225 participates in a covalent cross-link: Glycyl lysine isopeptide (Lys-Gly) (interchain with G-Cter in SUMO2). A phosphoserine mark is found at Ser604 and Ser611. The segment at 608-663 (LVDSPGMGNADDEQQEEGTSSKQVVKQGLQERSKEGDVEEPTDDSLPTTGDAGGRE) is disordered. A Glycyl lysine isopeptide (Lys-Gly) (interchain with G-Cter in SUMO2) cross-link involves residue Lys629. Ser652 is modified (phosphoserine).

This sequence belongs to the TFIIIC subunit 4 family. Part of the TFIIIC subcomplex TFIIIC2, consisting of six subunits, GTF3C1, GTF3C2, GTF3C3, GTF3C4, GTF3C5 and GTF3C6. Interacts with BRF1, GTF3C1, GTF3C2, GTF3C5, GTF3C6, POLR3C and POLR3F.

It localises to the nucleus. It carries out the reaction L-lysyl-[protein] + acetyl-CoA = N(6)-acetyl-L-lysyl-[protein] + CoA + H(+). In terms of biological role, essential for RNA polymerase III to make a number of small nuclear and cytoplasmic RNAs, including 5S RNA, tRNA, and adenovirus-associated (VA) RNA of both cellular and viral origin. Has histone acetyltransferase activity (HAT) with unique specificity for free and nucleosomal H3. May cooperate with GTF3C5 in facilitating the recruitment of TFIIIB and RNA polymerase through direct interactions with BRF1, POLR3C and POLR3F. May be localized close to the A box. The protein is General transcription factor 3C polypeptide 4 (GTF3C4) of Homo sapiens (Human).